A 187-amino-acid chain; its full sequence is MSVMPDHWIKDKAIQEKMIDPFIDYKESSGILSYGLSSYGYDARIDNKFKIFTNINPVTVDPKNFPLGSFIDKEEDICIIPPNSFVLAKTVEYFKIPKDILVMCVGKSTYARCGIVVNVTPLEPGWEGYVTLEFSNTTPLPAKIYAFEGACQFIFLKGDSQCSLSYNEMKGKYMKQLDVTLPIVNNS.

DCTP contacts are provided by residues 107–112 (KSTYAR), 131–133 (TLE), Gln-152, Tyr-166, Lys-175, and Gln-176. Glu-133 serves as the catalytic Proton donor/acceptor.

This sequence belongs to the dCTP deaminase family. As to quaternary structure, homotrimer.

The enzyme catalyses dCTP + H2O + H(+) = dUTP + NH4(+). It participates in pyrimidine metabolism; dUMP biosynthesis; dUMP from dCTP (dUTP route): step 1/2. Its function is as follows. Catalyzes the deamination of dCTP to dUTP. This chain is dCTP deaminase, found in Ehrlichia canis (strain Jake).